A 121-amino-acid chain; its full sequence is MTTSSTTAPIAQAHGRFIRGSVSKVRRVLDQIRGRTYRDALIMLEFMPYRSTGPITKVLRSAVANAEHNLGLDPASLVISSASADMGPSMKRYRPRAQGRAFQIKKQTCHISIAVAAQPDS.

The protein belongs to the universal ribosomal protein uL22 family. Part of the 50S ribosomal subunit.

Its function is as follows. This protein binds specifically to 23S rRNA; its binding is stimulated by other ribosomal proteins, e.g. L4, L17, and L20. It is important during the early stages of 50S assembly. It makes multiple contacts with different domains of the 23S rRNA in the assembled 50S subunit and ribosome. Functionally, the globular domain of the protein is located near the polypeptide exit tunnel on the outside of the subunit, while an extended beta-hairpin is found that lines the wall of the exit tunnel in the center of the 70S ribosome. The polypeptide is Large ribosomal subunit protein uL22 (Parasynechococcus marenigrum (strain WH8102)).